We begin with the raw amino-acid sequence, 634 residues long: Lamin tail domain-containing protein 2 (634 aa).

The interval 1–44 (MRWLRPAGRRREQESVSGHLGPPAGAPAAPETPTCLPDTTPHPA) is disordered. Residues 106–169 (SHSQEKLLQN…QKSCLLQLAR (64 aa)) adopt a coiled-coil conformation. Over residues 228-237 (FTNMEPSSKQ) the composition is skewed to polar residues. Disordered stretches follow at residues 228–349 (FTNM…TDPD) and 464–575 (HRIP…PAEA). Residues 276–287 (SSSGGADSDSSS) show a composition bias toward low complexity. Polar residues predominate over residues 310–321 (SEQALVQAGSYS). Residues 322-337 (RDSEDLQKTHSPRHGE) show a composition bias toward basic and acidic residues. The region spanning 350–468 (HWSPELLQSP…EVLSEHRIPR (119 aa)) is the LTD domain. The span at 502 to 513 (PPRPPRPLRKGR) shows a compositional bias: basic residues. The span at 540-550 (HAREGPARPEN) shows a compositional bias: basic and acidic residues.

The protein is Lamin tail domain-containing protein 2 (LMNTD2) of Homo sapiens (Human).